A 425-amino-acid chain; its full sequence is Elongation factor 1-alpha (425 aa).

The tr-type G domain maps to 5–221 (KPHINLAVIG…DELEVPDKPT (217 aa)). The interval 14–21 (GHIDHGKS) is G1. Residue 14-21 (GHIDHGKS) coordinates GTP. Serine 21 lines the Mg(2+) pocket. Residues 70–74 (GITID) are G2. Residues 91-94 (DCPG) are G3. Residues 91-95 (DCPGH) and 146-149 (NKMD) contribute to the GTP site. Positions 146–149 (NKMD) are G4. The segment at 185-187 (SAF) is G5.

It belongs to the TRAFAC class translation factor GTPase superfamily. Classic translation factor GTPase family. EF-Tu/EF-1A subfamily.

It localises to the cytoplasm. The enzyme catalyses GTP + H2O = GDP + phosphate + H(+). GTP hydrolase that promotes the GTP-dependent binding of aminoacyl-tRNA to the A-site of ribosomes during protein biosynthesis. The chain is Elongation factor 1-alpha from Methanospirillum hungatei JF-1 (strain ATCC 27890 / DSM 864 / NBRC 100397 / JF-1).